We begin with the raw amino-acid sequence, 153 residues long: Ribosome maturation factor RimP (153 aa).

Belongs to the RimP family.

It localises to the cytoplasm. Functionally, required for maturation of 30S ribosomal subunits. In Clostridioides difficile (strain 630) (Peptoclostridium difficile), this protein is Ribosome maturation factor RimP.